Reading from the N-terminus, the 53-residue chain is uncharacterized protein (53 aa).

Over residues 1–10 the composition is skewed to polar residues; that stretch reads MHILTRSSKN. Positions 1–25 are disordered; it reads MHILTRSSKNAFPRSRSRQDIHISS.

This is an uncharacterized protein from Saccharomyces cerevisiae (strain ATCC 204508 / S288c) (Baker's yeast).